The following is a 303-amino-acid chain: MMNTINTTNSLEKDNTVTSEQLQFTGAETQSKRQGSFVSFDTQTAPKKDVKNTIKLSTSDVHVYYGESEAIKGIDLEIYENEVIAFIGPSGCGKSTFLRTLNRMNDTIDSCRVTGKVLLDNQDIYDPNLDVVLLRAQVGMVFQKPNPFPKSIFENVAYGPKLHGLARDKYDLEEIVENSLHKAGLWDEVKDRLNQPGTGLSGGQQQRLCIARTIAVSPEVILMDEPCSALDPIATAKVEELISELSTQYTIAIVTHSMQQAARVSDRTAYFHLGDLIEVNSTEKVFTQPDHQLTEAYITGRFG.

An ABC transporter domain is found at 56–298 (LSTSDVHVYY…PDHQLTEAYI (243 aa)). Residue 88 to 95 (GPSGCGKS) coordinates ATP.

The protein belongs to the ABC transporter superfamily. Phosphate importer (TC 3.A.1.7) family. The complex is composed of two ATP-binding proteins (PstB), two transmembrane proteins (PstC and PstA) and a solute-binding protein (PstS).

It is found in the cell inner membrane. It catalyses the reaction phosphate(out) + ATP + H2O = ADP + 2 phosphate(in) + H(+). Functionally, part of the ABC transporter complex PstSACB involved in phosphate import. Responsible for energy coupling to the transport system. The protein is Phosphate import ATP-binding protein PstB of Acinetobacter baylyi (strain ATCC 33305 / BD413 / ADP1).